The chain runs to 245 residues: 14-3-3 protein theta (245 aa).

Met-1 bears the N-acetylmethionine mark. Lys-3 is subject to N6-acetyllysine. Lys-49 bears the N6-acetyllysine; alternate mark. Lys-49 participates in a covalent cross-link: Glycyl lysine isopeptide (Lys-Gly) (interchain with G-Cter in SUMO2); alternate. Lys-68 carries the N6-acetyllysine modification. Position 82 is a 3'-nitrotyrosine (Tyr-82). The residue at position 92 (Ser-92) is a Phosphoserine. Tyr-104 bears the 3'-nitrotyrosine mark. Lys-115 bears the N6-acetyllysine mark. A Phosphoserine; by CK1 modification is found at Ser-232.

The protein belongs to the 14-3-3 family. Homodimer. Interacts with CDK16. Interacts with RGS7 (phosphorylated form). Interacts with SSH1. Interacts with CDKN1B ('Thr-198' phosphorylated form); the interaction translocates CDKN1B to the cytoplasm. Interacts with GAB2. Interacts with the 'Ser-241' phosphorylated form of PDPK1. Interacts with the 'Thr-369' phosphorylated form of DAPK2. Interacts with PI4KB, TBC1D22A and TBC1D22B. Interacts with SLITRK1. Interacts with RIPOR2. Interacts with INAVA; the interaction increases upon PRR (pattern recognition receptor) stimulation and is required for cellular signaling pathway activation and cytokine secretion. Interacts with MARK2, MARK3 and MARK4. Interacts with MEFV.

It localises to the cytoplasm. Functionally, adapter protein implicated in the regulation of a large spectrum of both general and specialized signaling pathways. Binds to a large number of partners, usually by recognition of a phosphoserine or phosphothreonine motif. Binding generally results in the modulation of the activity of the binding partner. Negatively regulates the kinase activity of PDPK1. This is 14-3-3 protein theta (YWHAQ) from Bos taurus (Bovine).